Consider the following 515-residue polypeptide: Bifunctional dihydrofolate reductase-thymidylate synthase (515 aa).

A DHFR domain is found at 26–228; sequence AFSIVVAADQ…LSYEIMKYVP (203 aa). Residue Val-30 participates in substrate binding. Residues Ala-32, 38–44, 81–83, and 101–104 contribute to the NADP(+) site; these read GIGDGET, RKT, and LSCR. 3 residues coordinate substrate: Ile-154, Tyr-160, and Thr-178. 155–162 serves as a coordination point for NADP(+); the sequence is GGARVYTE. Residues 233 to 515 are thymidylate synthase; it reads ERQYLELIDR…YPPIKMEMAV (283 aa). DUMP is bound at residue Arg-253. Residue Cys-395 is part of the active site. Residues His-396, 416–420, Asn-428, and 458–460 each bind dUMP; these read QRCCD and HVY.

The protein in the N-terminal section; belongs to the dihydrofolate reductase family. This sequence in the C-terminal section; belongs to the thymidylate synthase family.

The enzyme catalyses (6S)-5,6,7,8-tetrahydrofolate + NADP(+) = 7,8-dihydrofolate + NADPH + H(+). The catalysed reaction is dUMP + (6R)-5,10-methylene-5,6,7,8-tetrahydrofolate = 7,8-dihydrofolate + dTMP. It participates in cofactor biosynthesis; tetrahydrofolate biosynthesis; 5,6,7,8-tetrahydrofolate from 7,8-dihydrofolate: step 1/1. Its function is as follows. Bifunctional enzyme. Involved in de novo dTMP biosynthesis. Key enzyme in folate metabolism. Catalyzes an essential reaction for de novo glycine and purine synthesis, DNA precursor synthesis, and for the conversion of dUMP to dTMP. The chain is Bifunctional dihydrofolate reductase-thymidylate synthase from Crithidia fasciculata.